Consider the following 475-residue polypeptide: Putative response regulator NtrX-like (475 aa).

Residues 5 to 121 (DVLIVDDEES…KLVILLKRAC (117 aa)) enclose the Response regulatory domain. 4-aspartylphosphate is present on aspartate 54. In terms of domain architecture, Sigma-54 factor interaction spans 143-369 (LVGGCSVTLK…LRNVVEWTLI (227 aa)). ATP is bound by residues 171 to 178 (GKVGSGKE) and 232 to 241 (ANNGTLYIDE).

Functionally, member of the two-component regulatory system RF_0895/RF_0427. This is Putative response regulator NtrX-like from Rickettsia felis (strain ATCC VR-1525 / URRWXCal2) (Rickettsia azadi).